Here is a 276-residue protein sequence, read N- to C-terminus: Secreted RxLR effector protein 85 (276 aa).

The N-terminal stretch at 1–27 is a signal peptide; sequence MRYCAFRLGLFFIGYSCCVLLSTPTLA. The RxLR motif lies at 110–113; that stretch reads RQLR.

It belongs to the RxLR effector family.

The protein localises to the secreted. It is found in the host cell membrane. Its function is as follows. Secreted effector that partially suppresses the host cell death induced by cell death-inducing proteins. The polypeptide is Secreted RxLR effector protein 85 (Plasmopara viticola (Downy mildew of grapevine)).